Consider the following 284-residue polypeptide: NH(3)-dependent NAD(+) synthetase (284 aa).

51-58 (GISGGIDS) serves as a coordination point for ATP. Residue aspartate 57 coordinates Mg(2+). A deamido-NAD(+)-binding site is contributed by arginine 148. An ATP-binding site is contributed by threonine 168. Glutamate 173 is a Mg(2+) binding site. Lysine 181 and aspartate 188 together coordinate deamido-NAD(+). ATP contacts are provided by lysine 197 and threonine 219. 268–269 (HK) serves as a coordination point for deamido-NAD(+).

This sequence belongs to the NAD synthetase family. As to quaternary structure, homodimer.

The enzyme catalyses deamido-NAD(+) + NH4(+) + ATP = AMP + diphosphate + NAD(+) + H(+). It functions in the pathway cofactor biosynthesis; NAD(+) biosynthesis; NAD(+) from deamido-NAD(+) (ammonia route): step 1/1. Catalyzes the ATP-dependent amidation of deamido-NAD to form NAD. Uses ammonia as a nitrogen source. This is NH(3)-dependent NAD(+) synthetase from Burkholderia mallei (strain NCTC 10247).